The following is a 443-amino-acid chain: Diels-Alderase poxQ (443 aa).

The signal sequence occupies residues 1–23 (MARIPLEFLSITLPVLLLAYCLA). 3 N-linked (GlcNAc...) asparagine glycosylation sites follow: Asn78, Asn97, and Asn145.

Belongs to the Diels-Alderase family.

Its pathway is secondary metabolite biosynthesis. Diels-Alderase; part of the gene cluster that mediates the biosynthesis of oxaleimides, cytotoxic compounds containing an unusual disubstituted succinimide moiety. The first step of the pathway is provided by the HR-PKS poxF that serves in a new mode of collaborative biosynthesis with the PKS-NRPS poxE, by providing the olefin containing amino acid substrate via the synthesis of an ACP-bound dec-4-enoate. The cytochrome P450 monooxygenase poxM-catalyzed oxidation at the alpha-position creates the enzyme-bound 2-hydroxydec-4-enoyl-ACP thioester, which may be prone to spontaneous hydrolysis to yield 2-hydroxydec-4-enoic acid due to increased electrophilicity of the carbonyl. 2-hydroxydec-4-enoic acid can then be further oxidized by poxM to yield the alpha-ketoacid 2-oxodec-4-enoicacid, which is reductively aminated by the aminotransferase poxL to yield (S,E)-2-aminodec-4-enoic acid. The Hybrid PKS-NRPS synthetase poxE then performs condensation between the octaketide product of its PKS modules and the amino group of (S,E)-2-aminodec-4-enoic acid which is activated and incorporated by the adenylation domain. The resulting aminoacyl product can be cyclized by the Diels-Alderase PoxQ and reductively released by the reductive (R) domain of poxE to yield an aldehyde intermediate. The released aldehyde is then substrate for a Knoevenagel condensation by the hydrolyase poxO followed by an oxidation at the 5-position of the pyrrolidone ring. The presence of the olefin from the amino acid building block allows for migration of the substituted allyl group to occur. This allylic transposition reaction takes place in a conjugate addition, semipinacol-like fashion to yield a succinimide intermediate. Iterative two-electron oxidations of the C7 methyl of the succinimide intermediate to the carboxylic acid can be catalyzed by one of two remaining cytochrome P450 monooxygenasess poxC or poxD to yield oxaleimide A. Subsequent oxidation yields the maleimide scaffold oxaleimide I. Both oxaleimide A and oxaleimide I can undergo oxidative modifications in the decalin ring to yield the series of products oxaleimides B to H. The chain is Diels-Alderase poxQ from Penicillium oxalicum (strain 114-2 / CGMCC 5302) (Penicillium decumbens).